We begin with the raw amino-acid sequence, 242 residues long: 6-carboxyhexanoate--CoA ligase (242 aa).

The protein belongs to the BioW family. In terms of assembly, homodimer. Requires Mg(2+) as cofactor.

The catalysed reaction is heptanedioate + ATP + CoA = 6-carboxyhexanoyl-CoA + AMP + diphosphate. It functions in the pathway metabolic intermediate metabolism; pimeloyl-CoA biosynthesis; pimeloyl-CoA from pimelate: step 1/1. Its function is as follows. Catalyzes the transformation of pimelate into pimeloyl-CoA with concomitant hydrolysis of ATP to AMP. This chain is 6-carboxyhexanoate--CoA ligase, found in Veillonella parvula (strain ATCC 10790 / DSM 2008 / CCUG 5123 / JCM 12972 / NCTC 11810 / Te3) (Veillonella alcalescens).